Consider the following 58-residue polypeptide: Isocitrate lyase (58 aa).

This sequence belongs to the isocitrate lyase/PEP mutase superfamily. Isocitrate lyase family. In terms of assembly, homotetramer. It depends on Mg(2+) as a cofactor.

It is found in the glyoxysome. The catalysed reaction is D-threo-isocitrate = glyoxylate + succinate. Its pathway is carbohydrate metabolism; glyoxylate cycle; (S)-malate from isocitrate: step 1/2. Functionally, involved in storage lipid mobilization during the growth of higher plant seedling. This chain is Isocitrate lyase, found in Helianthus annuus (Common sunflower).